The primary structure comprises 476 residues: Glycogen synthase (476 aa).

ADP-alpha-D-glucose is bound at residue Lys15.

This sequence belongs to the glycosyltransferase 1 family. Bacterial/plant glycogen synthase subfamily.

It catalyses the reaction [(1-&gt;4)-alpha-D-glucosyl](n) + ADP-alpha-D-glucose = [(1-&gt;4)-alpha-D-glucosyl](n+1) + ADP + H(+). It participates in glycan biosynthesis; glycogen biosynthesis. Synthesizes alpha-1,4-glucan chains using ADP-glucose. The chain is Glycogen synthase from Yersinia pseudotuberculosis serotype O:1b (strain IP 31758).